A 317-amino-acid polypeptide reads, in one-letter code: Methionyl-tRNA formyltransferase (317 aa).

Position 109–112 (109–112 (SLLP)) interacts with (6S)-5,6,7,8-tetrahydrofolate.

The protein belongs to the Fmt family.

The catalysed reaction is L-methionyl-tRNA(fMet) + (6R)-10-formyltetrahydrofolate = N-formyl-L-methionyl-tRNA(fMet) + (6S)-5,6,7,8-tetrahydrofolate + H(+). Functionally, attaches a formyl group to the free amino group of methionyl-tRNA(fMet). The formyl group appears to play a dual role in the initiator identity of N-formylmethionyl-tRNA by promoting its recognition by IF2 and preventing the misappropriation of this tRNA by the elongation apparatus. The protein is Methionyl-tRNA formyltransferase of Desulforamulus reducens (strain ATCC BAA-1160 / DSM 100696 / MI-1) (Desulfotomaculum reducens).